A 355-amino-acid polypeptide reads, in one-letter code: Acidic fibroblast growth factor intracellular-binding protein B (355 aa).

As to quaternary structure, interacts with IER2.

The protein resides in the nucleus. The protein localises to the endomembrane system. Its function is as follows. Mediates with IER2 FGF-signaling in Kupffer's vesicle ciliogenesis and in the establishment of laterality in the embryo. May be involved in mitogenic function of FGF1. This Danio rerio (Zebrafish) protein is Acidic fibroblast growth factor intracellular-binding protein B.